Consider the following 156-residue polypeptide: MSSHVVSLTEELVTPILEEKNLELVDIEYVKEGKNWFLRVYIDKEGGIDIMECGEVSELLSEKLDESDPITEAYFLEVSSPGVERPLKKKEDFDASIGKNIFVKLYEPIDGSKEYEGTLQSFDGETVTMEYKVKTRKKQVEIPYSKIAKARIAVTF.

This sequence belongs to the RimP family.

It is found in the cytoplasm. Required for maturation of 30S ribosomal subunits. The chain is Ribosome maturation factor RimP from Oceanobacillus iheyensis (strain DSM 14371 / CIP 107618 / JCM 11309 / KCTC 3954 / HTE831).